The sequence spans 492 residues: MTASDTVYLFQSLADRSKNPQERSLFRNYISEALELLRETPSSPTVVHEQCFRFLANSCSDNNENRAAFFNLGGIDVLKPYCSKDNEYSALAFAVIHNCILDSREYRAQVADAQILNLAITYWIDWQHKLKAPFFNMLSFVCEMLYPFCKDCSLVFMGLQLLPSMVREGIDPFTIFAKAFDNSLVCVSFAQNPSMLIDSIDLVRNMPDFTKKTDMLNLFPRIAEHDAVLSTSLHADPQFLDFLESCFRSDDSNSITMASLFIGNLVRRDDIAKQLMQKDFLNMLISCIMQEKDVDGNVERVYACCAALRHFMIPVSSRAHFAPTAILLQEKLASSRFTQLHYISASMIRLSMPYILCELADHPERFYKLKDWSKSPDFNLALESNRTLLGFVKHYLTVPKSKEKISAFFKNNINLFEESVVTVLSTESKYPIVIGEAVFVAILMIKHGYANVAQTIIASPVYEALKSYRDDPNLAYQLKQNVRSLLVLVEHR.

The protein localises to the cytoplasm. The protein resides in the nucleus. In terms of biological role, probably acts as a GEF (guanine nucleotide exchange factor) for the Rho family of small GTP-binding proteins (G proteins) that stimulates the dissociation of GDP to enable subsequent binding of GTP. May also chaperone the processing and/or trafficking of small GTPases independently of GEF activity. May be involved in the control of polarized cell growth via CDC42-mediated signaling. May also be involved in the control of cell-wall organization via RHO1-mediated signaling. The sequence is that of GTPase-GDP dissociation stimulator arz1 from Schizosaccharomyces pombe (strain 972 / ATCC 24843) (Fission yeast).